Here is a 1213-residue protein sequence, read N- to C-terminus: DNA-directed RNA polymerase subunit beta' (1213 aa).

Positions 60, 62, 75, and 78 each coordinate Zn(2+). Mg(2+) contacts are provided by D450, D452, and D454. The Zn(2+) site is built by C819, C893, C900, and C903.

Belongs to the RNA polymerase beta' chain family. As to quaternary structure, the RNAP catalytic core consists of 2 alpha, 1 beta, 1 beta' and 1 omega subunit. When a sigma factor is associated with the core the holoenzyme is formed, which can initiate transcription. It depends on Mg(2+) as a cofactor. Requires Zn(2+) as cofactor.

The enzyme catalyses RNA(n) + a ribonucleoside 5'-triphosphate = RNA(n+1) + diphosphate. Functionally, DNA-dependent RNA polymerase catalyzes the transcription of DNA into RNA using the four ribonucleoside triphosphates as substrates. This Streptococcus pyogenes serotype M1 protein is DNA-directed RNA polymerase subunit beta'.